The primary structure comprises 473 residues: Suppressor of SWI4 1 homolog (473 aa).

Residues 29–292 form the Brix domain; that stretch reads PHSFVFTRGC…LIKVQEGVGE (264 aa). 2 positions are modified to phosphoserine: serine 238 and serine 240. The interval 323 to 473 is disordered; the sequence is AQRQAQQAQN…GRGRPGKRVA (151 aa). Positions 324–334 are enriched in low complexity; sequence QRQAQQAQNVQ. Over residues 335–352 the composition is skewed to basic and acidic residues; the sequence is RKQEQREAHRKKSLEGMK. The residue at position 359 (serine 359) is a Phosphoserine. A compositionally biased stretch (acidic residues) spans 375–388; it reads LGEDDDEQEDDDIE. Residues 409 to 421 show a composition bias toward basic residues; it reads KRLAKSPGRKRKR. Basic and acidic residues predominate over residues 422-443; that stretch reads WEMDRGRGRLCDQKFPKTKDKS. Lysine 438 bears the N6-acetyllysine mark. Residues 462–473 show a composition bias toward basic residues; it reads GRGRGRPGKRVA.

In terms of tissue distribution, widely expressed.

Its subcellular location is the nucleus. It localises to the nucleolus. In terms of biological role, may have a role in cell growth. In Homo sapiens (Human), this protein is Suppressor of SWI4 1 homolog (PPAN).